We begin with the raw amino-acid sequence, 253 residues long: REF/SRPP-like protein OsI_017815 (253 aa).

The segment at 1–26 (MADSGSDAPISNRPEEEVTVEKTPEM) is disordered. Over residues 13-26 (RPEEEVTVEKTPEM) the composition is skewed to basic and acidic residues.

It belongs to the REF/SRPP family.

In Oryza sativa subsp. indica (Rice), this protein is REF/SRPP-like protein OsI_017815.